The sequence spans 719 residues: Phosphoribosylformylglycinamidine synthase subunit PurL (719 aa).

The active site involves H47. 2 residues coordinate ATP: Y50 and K89. E91 is a binding site for Mg(2+). Substrate contacts are provided by residues S92–H95 and R114. H93 serves as the catalytic Proton acceptor. Position 115 (D115) interacts with Mg(2+). Residue Q238 coordinates substrate. D266 contributes to the Mg(2+) binding site. Substrate is bound at residue E310–Q312. Residues D488 and G525 each coordinate ATP. N526 lines the Mg(2+) pocket. Residue S528 participates in substrate binding.

This sequence belongs to the FGAMS family. In terms of assembly, monomer. Part of the FGAM synthase complex composed of 1 PurL, 1 PurQ and 2 PurS subunits.

The protein resides in the cytoplasm. The enzyme catalyses N(2)-formyl-N(1)-(5-phospho-beta-D-ribosyl)glycinamide + L-glutamine + ATP + H2O = 2-formamido-N(1)-(5-O-phospho-beta-D-ribosyl)acetamidine + L-glutamate + ADP + phosphate + H(+). It functions in the pathway purine metabolism; IMP biosynthesis via de novo pathway; 5-amino-1-(5-phospho-D-ribosyl)imidazole from N(2)-formyl-N(1)-(5-phospho-D-ribosyl)glycinamide: step 1/2. Its function is as follows. Part of the phosphoribosylformylglycinamidine synthase complex involved in the purines biosynthetic pathway. Catalyzes the ATP-dependent conversion of formylglycinamide ribonucleotide (FGAR) and glutamine to yield formylglycinamidine ribonucleotide (FGAM) and glutamate. The FGAM synthase complex is composed of three subunits. PurQ produces an ammonia molecule by converting glutamine to glutamate. PurL transfers the ammonia molecule to FGAR to form FGAM in an ATP-dependent manner. PurS interacts with PurQ and PurL and is thought to assist in the transfer of the ammonia molecule from PurQ to PurL. The chain is Phosphoribosylformylglycinamidine synthase subunit PurL from Roseobacter denitrificans (strain ATCC 33942 / OCh 114) (Erythrobacter sp. (strain OCh 114)).